The chain runs to 172 residues: Large ribosomal subunit protein uL10 (172 aa).

It belongs to the universal ribosomal protein uL10 family. In terms of assembly, part of the ribosomal stalk of the 50S ribosomal subunit. The N-terminus interacts with L11 and the large rRNA to form the base of the stalk. The C-terminus forms an elongated spine to which L12 dimers bind in a sequential fashion forming a multimeric L10(L12)X complex.

Its function is as follows. Forms part of the ribosomal stalk, playing a central role in the interaction of the ribosome with GTP-bound translation factors. In Francisella tularensis subsp. mediasiatica (strain FSC147), this protein is Large ribosomal subunit protein uL10.